The chain runs to 352 residues: Uroporphyrinogen decarboxylase (352 aa).

Substrate-binding positions include 27 to 31 (RQAGR), Asp77, Tyr154, Thr209, and His325.

The protein belongs to the uroporphyrinogen decarboxylase family. As to quaternary structure, homodimer.

It is found in the cytoplasm. It carries out the reaction uroporphyrinogen III + 4 H(+) = coproporphyrinogen III + 4 CO2. It functions in the pathway porphyrin-containing compound metabolism; protoporphyrin-IX biosynthesis; coproporphyrinogen-III from 5-aminolevulinate: step 4/4. Its function is as follows. Catalyzes the decarboxylation of four acetate groups of uroporphyrinogen-III to yield coproporphyrinogen-III. This chain is Uroporphyrinogen decarboxylase, found in Legionella pneumophila (strain Lens).